The chain runs to 250 residues: Putative (5-formylfuran-3-yl)methyl phosphate synthase (250 aa).

Lysine 29 acts as the Schiff-base intermediate with substrate in catalysis. Lysine 87 (proton acceptor) is an active-site residue.

This sequence belongs to the MfnB family.

It catalyses the reaction 2 D-glyceraldehyde 3-phosphate = 4-(hydroxymethyl)-2-furancarboxaldehyde phosphate + phosphate + 2 H2O. In terms of biological role, catalyzes the formation of 4-(hydroxymethyl)-2-furancarboxaldehyde phosphate (4-HFC-P) from two molecules of glyceraldehyde-3-P (GA-3-P). The sequence is that of Putative (5-formylfuran-3-yl)methyl phosphate synthase from Streptomyces griseus subsp. griseus (strain JCM 4626 / CBS 651.72 / NBRC 13350 / KCC S-0626 / ISP 5235).